A 627-amino-acid chain; its full sequence is Zinc finger protein 256 (627 aa).

One can recognise a KRAB domain in the interval 14-96 (VTFEDVAVYF…QKTNPCEICG (83 aa)). Residues 55–76 (GSGAGDEEAPYQQSTSPQRVSQ) form a disordered region. A compositionally biased stretch (polar residues) spans 65 to 75 (YQQSTSPQRVS). 15 consecutive C2H2-type zinc fingers follow at residues 90 to 112 (NPCE…QGTH), 239 to 261 (YMCS…LRVH), 267 to 289 (YTCG…RRIH), 295 to 317 (HQCD…QRVH), 323 to 345 (YKCS…QRIH), 351 to 373 (YECS…QRVH), 379 to 401 (YMCS…RRLH), 407 to 429 (YECS…QRVH), 435 to 457 (HECH…ERVH), 463 to 485 (YECS…WKVH), 491 to 513 (YECG…QRVH), 519 to 541 (YECN…RRSH), 547 to 569 (YECS…RRVH), 575 to 597 (YECS…QRIH), and 603 to 625 (YECS…QNVH).

The protein belongs to the krueppel C2H2-type zinc-finger protein family. As to quaternary structure, interacts with TRIM28.

It is found in the nucleus. Transcriptional repressor that plays a role in cell proliferation. Requires TRIM28 for its activity. This is Zinc finger protein 256 (ZNF256) from Homo sapiens (Human).